Here is an 80-residue protein sequence, read N- to C-terminus: Conotoxin Bu3 (80 aa).

The signal sequence occupies residues 1 to 22 (MKLMCVLIVSVLVLTACQLSTA). Residues 23 to 51 (DDTRDKQKDRLVRLFRKKRDSSDSGLLPR) constitute a propeptide that is removed on maturation. Cystine bridges form between C53-C69, C60-C72, and C68-C79.

This sequence belongs to the conotoxin O1 superfamily. Expressed by the venom duct.

It is found in the secreted. This is Conotoxin Bu3 from Conus bullatus (Bubble cone).